Consider the following 422-residue polypeptide: 3-phosphoshikimate 1-carboxyvinyltransferase (422 aa).

K20, S21, and R25 together coordinate 3-phosphoshikimate. K20 lines the phosphoenolpyruvate pocket. Positions 90 and 118 each coordinate phosphoenolpyruvate. 3-phosphoshikimate-binding residues include S161, S162, Q163, S189, D305, and K332. A phosphoenolpyruvate-binding site is contributed by Q163. D305 functions as the Proton acceptor in the catalytic mechanism. The phosphoenolpyruvate site is built by R336 and R378.

It belongs to the EPSP synthase family. As to quaternary structure, monomer.

Its subcellular location is the cytoplasm. It catalyses the reaction 3-phosphoshikimate + phosphoenolpyruvate = 5-O-(1-carboxyvinyl)-3-phosphoshikimate + phosphate. The protein operates within metabolic intermediate biosynthesis; chorismate biosynthesis. Catalyzes the transfer of the enolpyruvyl moiety of phosphoenolpyruvate (PEP) to the 5-hydroxyl of shikimate-3-phosphate (S3P) to produce enolpyruvyl shikimate-3-phosphate and inorganic phosphate. The sequence is that of 3-phosphoshikimate 1-carboxyvinyltransferase from Nitrosopumilus maritimus (strain SCM1).